A 279-amino-acid polypeptide reads, in one-letter code: Protein BASIC PENTACYSTEINE2 (279 aa).

A disordered region spans residues 126–167 (TKKRKTNAKAGSTPKAKKPRKPKDENSNNNNNNNTNVTRVKP). Residues 152–161 (SNNNNNNNTN) show a composition bias toward low complexity.

The protein belongs to the BBR/BPC family. In terms of tissue distribution, expressed in seedlings, leaves and pistils. Detected in the base of flowers and tips of carpels, in sepal and petal vasculature, in pollen grains, in young rosette, in the lateral and tip of primary roots, and in ovule at the exception of the outer integument.

The protein resides in the nucleus. In terms of biological role, transcriptional regulator that specifically binds to GA-rich elements (GAGA-repeats) present in regulatory sequences of genes involved in developmental processes. This Arabidopsis thaliana (Mouse-ear cress) protein is Protein BASIC PENTACYSTEINE2.